Reading from the N-terminus, the 179-residue chain is Acireductone dioxygenase (179 aa).

Fe(2+) is bound by residues His-99, His-101, Glu-105, and His-143. 4 residues coordinate Ni(2+): His-99, His-101, Glu-105, and His-143.

Belongs to the acireductone dioxygenase (ARD) family. As to quaternary structure, monomer. It depends on Fe(2+) as a cofactor. Ni(2+) is required as a cofactor.

The catalysed reaction is 1,2-dihydroxy-5-(methylsulfanyl)pent-1-en-3-one + O2 = 3-(methylsulfanyl)propanoate + CO + formate + 2 H(+). It carries out the reaction 1,2-dihydroxy-5-(methylsulfanyl)pent-1-en-3-one + O2 = 4-methylsulfanyl-2-oxobutanoate + formate + 2 H(+). Its pathway is amino-acid biosynthesis; L-methionine biosynthesis via salvage pathway; L-methionine from S-methyl-5-thio-alpha-D-ribose 1-phosphate: step 5/6. Its function is as follows. Catalyzes 2 different reactions between oxygen and the acireductone 1,2-dihydroxy-3-keto-5-methylthiopentene (DHK-MTPene) depending upon the metal bound in the active site. Fe-containing acireductone dioxygenase (Fe-ARD) produces formate and 2-keto-4-methylthiobutyrate (KMTB), the alpha-ketoacid precursor of methionine in the methionine recycle pathway. Ni-containing acireductone dioxygenase (Ni-ARD) produces methylthiopropionate, carbon monoxide and formate, and does not lie on the methionine recycle pathway. The protein is Acireductone dioxygenase of Sulfurihydrogenibium sp. (strain YO3AOP1).